We begin with the raw amino-acid sequence, 299 residues long: MTEMTGSRLRGSLTALVTPFRDGAFDEAAFRKFVRWQIEQGSHGLVPTGTTGESPTLTHSEHDRVVEACIDEAGGRVPVVAGAGSNSTAEAVERAQHAERAGADAVLVVTPYYNKPTQAGLYAHFKAVNDAVGIPIIIYNIPPRSVIDMSVETMARLFELKNIAGVKDATAKIDRVSQQRQAMGDSFIQLSGEDATALGYNAHGGHGCISVVANVAPRLCADLQEATLAGDYAKALTLQDRLFPLQTGLFAEANPAPVKYALSRLGHMTDELRLPLVPVTEPTKRIVDDALRHAGLLVD.

Residue Thr51 coordinates pyruvate. Catalysis depends on Tyr139, which acts as the Proton donor/acceptor. Lys167 (schiff-base intermediate with substrate) is an active-site residue. Ile209 is a pyruvate binding site.

Belongs to the DapA family. In terms of assembly, homotetramer; dimer of dimers.

The protein localises to the cytoplasm. The catalysed reaction is L-aspartate 4-semialdehyde + pyruvate = (2S,4S)-4-hydroxy-2,3,4,5-tetrahydrodipicolinate + H2O + H(+). It functions in the pathway amino-acid biosynthesis; L-lysine biosynthesis via DAP pathway; (S)-tetrahydrodipicolinate from L-aspartate: step 3/4. In terms of biological role, catalyzes the condensation of (S)-aspartate-beta-semialdehyde [(S)-ASA] and pyruvate to 4-hydroxy-tetrahydrodipicolinate (HTPA). The polypeptide is 4-hydroxy-tetrahydrodipicolinate synthase (Methylobacterium radiotolerans (strain ATCC 27329 / DSM 1819 / JCM 2831 / NBRC 15690 / NCIMB 10815 / 0-1)).